The sequence spans 294 residues: Non-selective voltage-gated ion channel VDAC2 (294 aa).

N-acetylalanine is present on alanine 2. ATP contacts are provided by lysine 23 and lysine 31. Lysine 31 is subject to N6-acetyllysine; alternate. N6-succinyllysine; alternate is present on lysine 31. A Glycyl lysine isopeptide (Lys-Gly) (interchain with G-Cter in ubiquitin); alternate cross-link involves residue lysine 31. Transmembrane regions (beta stranded) follow at residues 37–46 (LVKLDVKTKS) and 50–58 (VEFSTSGSS). Lysine 64 is covalently cross-linked (Glycyl lysine isopeptide (Lys-Gly) (interchain with G-Cter in ubiquitin)). The beta stranded transmembrane segment at 65 to 75 (VTGTLETKYKW) threads the bilayer. At tyrosine 78 the chain carries Phosphotyrosine. 3 beta stranded membrane-spanning segments follow: residues 80 to 87 (LTFTEKWN), 91 to 100 (TLGTEIAIED), and 106 to 115 (LKLTFDTTFS). The residue at position 118 (threonine 118) is a Phosphothreonine. At lysine 120 the chain carries N6-acetyllysine; alternate. Lysine 120 is covalently cross-linked (Glycyl lysine isopeptide (Lys-Gly) (interchain with G-Cter in ubiquitin); alternate). Lysine 121 is covalently cross-linked (Glycyl lysine isopeptide (Lys-Gly) (interchain with G-Cter in ubiquitin)). The next 4 beta stranded transmembrane spans lie at 122–131 (SGKIKSSYKR), 134–141 (VNLGCDVD), 148–156 (AIHGSAVFG), and 161–169 (LAGYQMTFD). A Glycyl lysine isopeptide (Lys-Gly) (interchain with G-Cter in ubiquitin) cross-link involves residue lysine 172. 6 beta stranded membrane passes run 174 to 186 (KLTR…GYRT), 189 to 196 (FQLHTNVN), 200 to 209 (EFGGSIYQKV), 213 to 222 (LDTSVNLAWT), 229 to 238 (RFGIAAKYQL), and 242 to 249 (ASISAKVN). Serine 251 carries the phosphoserine modification. NAD(+)-binding positions include 253–255 (LIG) and 271–275 (SALVD). 2 consecutive transmembrane segments (beta stranded) span residues 253–262 (LIGVGYTQTL) and 265–274 (GVKLTLSALV). At lysine 277 the chain carries N6-acetyllysine; alternate. Residue lysine 277 forms a Glycyl lysine isopeptide (Lys-Gly) (interchain with G-Cter in ubiquitin); alternate linkage. A beta stranded transmembrane segment spans residues 284–293 (HKLGLALELE).

Belongs to the eukaryotic mitochondrial porin family. Monomer, homodimer and higher order oligomers; formation of higher order structures is necessary for scramblase activity. Interacts with ARMC12 in a TBC1D21-dependent manner. Interacts with KLC3. Interacts with SPATA33. Interacts with PPP3CC in a SPATA33-dependent manner. In terms of processing, ubiquitinated by PRKN during mitophagy, leading to its degradation and enhancement of mitophagy. Deubiquitinated by USP30.

It localises to the mitochondrion outer membrane. Its subcellular location is the membrane. It carries out the reaction chloride(in) = chloride(out). The catalysed reaction is K(+)(in) = K(+)(out). The enzyme catalyses a 1,2-diacyl-sn-glycero-3-phospho-L-serine(in) = a 1,2-diacyl-sn-glycero-3-phospho-L-serine(out). It catalyses the reaction a 1,2-diacyl-sn-glycero-3-phosphocholine(in) = a 1,2-diacyl-sn-glycero-3-phosphocholine(out). It carries out the reaction a 1,2-diacyl-sn-glycero-3-phospho-(1D-myo-inositol)(in) = a 1,2-diacyl-sn-glycero-3-phospho-(1D-myo-inositol)(out). Functionally, non-selective voltage-gated ion channel that mediates the transport of anions and cations through the mitochondrion outer membrane and plasma membrane. The channel adopts an open conformation at zero mV and a closed conformation at both positive and negative potentials. There are two populations of channels; the main that functions in a lower open-state conductance with lower ion selectivity, that switch, in a voltage-dependent manner, from the open to a low-conducting 'closed' state and the other that has a normal ion selectivity in the typical high conductance, 'open' state. Binds various lipids, including the sphingolipid ceramide, the phospholipid phosphatidylcholine, and the sterols cholesterol and oxysterol. Binding of ceramide promotes the mitochondrial outer membrane permeabilization (MOMP) apoptotic pathway. Catalyzes the scrambling of phospholipids across the outer mitochondrial membrane; the mechanism is unrelated to channel activity and is capable of translocating both anionic and zwitterionic phospholipids. The polypeptide is Non-selective voltage-gated ion channel VDAC2 (Sus scrofa (Pig)).